The chain runs to 174 residues: Large ribosomal subunit protein uL10 (174 aa).

Belongs to the universal ribosomal protein uL10 family. Part of the ribosomal stalk of the 50S ribosomal subunit. The N-terminus interacts with L11 and the large rRNA to form the base of the stalk. The C-terminus forms an elongated spine to which L12 dimers bind in a sequential fashion forming a multimeric L10(L12)X complex.

In terms of biological role, forms part of the ribosomal stalk, playing a central role in the interaction of the ribosome with GTP-bound translation factors. In Pelobacter propionicus (strain DSM 2379 / NBRC 103807 / OttBd1), this protein is Large ribosomal subunit protein uL10.